The sequence spans 174 residues: Dual-action ribosomal maturation protein DarP (174 aa).

Belongs to the DarP family.

Its subcellular location is the cytoplasm. Functionally, member of a network of 50S ribosomal subunit biogenesis factors which assembles along the 30S-50S interface, preventing incorrect 23S rRNA structures from forming. Promotes peptidyl transferase center (PTC) maturation. This is Dual-action ribosomal maturation protein DarP from Pseudomonas aeruginosa (strain LESB58).